A 446-amino-acid chain; its full sequence is Exodeoxyribonuclease 7 large subunit (446 aa).

Belongs to the XseA family. In terms of assembly, heterooligomer composed of large and small subunits.

The protein localises to the cytoplasm. The catalysed reaction is Exonucleolytic cleavage in either 5'- to 3'- or 3'- to 5'-direction to yield nucleoside 5'-phosphates.. Bidirectionally degrades single-stranded DNA into large acid-insoluble oligonucleotides, which are then degraded further into small acid-soluble oligonucleotides. The protein is Exodeoxyribonuclease 7 large subunit of Streptococcus pyogenes serotype M6 (strain ATCC BAA-946 / MGAS10394).